A 212-amino-acid chain; its full sequence is Ropporin-1 (212 aa).

In terms of domain architecture, RIIa spans 12 to 49 (PELPKMLKEFAKAAIRAQPQDLIQWGADYFEALSRGET). Serine 56 is modified (phosphoserine). The interval 209–212 (VWLE) is interaction with RHPN1.

The protein belongs to the ropporin family. In terms of assembly, homodimer. Interacts with AKAP3. May interact with SPA17. Interacts with RHPN1. Interacts with FSCB; the interaction increases upon spermatozoa capacitation conditions. Interacts with CFAP61. Sumoylated, sumoylation decreases upon spermatozoa capacitation conditions.

It localises to the cell projection. The protein localises to the cilium. It is found in the flagellum. Functionally, important for male fertility. With ROPN1L, involved in fibrous sheath integrity and sperm motility, plays a role in PKA-dependent signaling processes required for spermatozoa capacitation. The chain is Ropporin-1 (ROPN1) from Macaca fascicularis (Crab-eating macaque).